Reading from the N-terminus, the 439-residue chain is Xylose isomerase (439 aa).

Residues histidine 101 and aspartate 104 contribute to the active site. Mg(2+) contacts are provided by glutamate 232, glutamate 268, histidine 271, aspartate 296, aspartate 307, aspartate 309, and aspartate 339.

Belongs to the xylose isomerase family. Homotetramer. The cofactor is Mg(2+).

It localises to the cytoplasm. It catalyses the reaction alpha-D-xylose = alpha-D-xylulofuranose. This chain is Xylose isomerase, found in Photorhabdus laumondii subsp. laumondii (strain DSM 15139 / CIP 105565 / TT01) (Photorhabdus luminescens subsp. laumondii).